The following is a 356-amino-acid chain: N-acyl-phosphatidylethanolamine-hydrolyzing phospholipase D 1 (356 aa).

2 residues coordinate Zn(2+): histidine 144 and histidine 146. An N-acyl-1,2-diacyl-sn-glycero-3-phosphoethanolamine is bound at residue tyrosine 147. Zn(2+)-binding residues include aspartate 148, histidine 149, histidine 217, and aspartate 248. Histidine 286 lines the an N-acyl-1,2-diacyl-sn-glycero-3-phosphoethanolamine pocket. Zn(2+) is bound at residue histidine 308.

It belongs to the NAPE-PLD family. Zn(2+) is required as a cofactor. As to expression, expressed in interneurons that are in close proximity to the primary sensory neurons. Predominantly expressed in the pharynx but can also be found in cell bodies of the dorsal and ventral nerve cords.

It catalyses the reaction an N-acyl-1,2-diacyl-sn-glycero-3-phosphoethanolamine + H2O = an N-acylethanolamine + a 1,2-diacyl-sn-glycero-3-phosphate + H(+). The catalysed reaction is 1,2-dihexadecanoyl-sn-glycero-3-phospho-(N-hexadecanoyl)-ethanolamine + H2O = 1,2-dihexadecanoyl-sn-glycero-3-phosphate + N-hexadecanoylethanolamine + H(+). The enzyme catalyses N-(5Z,8Z,11Z,14Z-eicosatetraenoyl)-1,2-di-(9Z-octadecenoyl)-sn-glycero-3-phosphoethanolamine + H2O = N-(5Z,8Z,11Z,14Z-eicosatetraenoyl)-ethanolamine + 1,2-di-(9Z-octadecenoyl)-sn-glycero-3-phosphate + H(+). In terms of biological role, D-type phospholipase that hydrolyzes N-acyl-phosphatidylethanolamines (NAPEs) to produce bioactive N-acylethanolamines/fatty acid ethanolamides (NAEs/FAEs) and phosphatidic acid. NAEs are bioactive lipids that are involved in diverse physiological processes such as growth and lifespan. The chain is N-acyl-phosphatidylethanolamine-hydrolyzing phospholipase D 1 from Caenorhabditis elegans.